Reading from the N-terminus, the 163-residue chain is Phosphopantetheine adenylyltransferase (163 aa).

Threonine 10 is a substrate binding site. ATP contacts are provided by residues 10–11 (TF) and histidine 18. Residues lysine 42, leucine 74, and arginine 88 each coordinate substrate. ATP contacts are provided by residues 89-91 (GLR), glutamate 99, and 124-130 (NSFISST).

Belongs to the bacterial CoaD family. As to quaternary structure, homohexamer. Mg(2+) serves as cofactor.

It is found in the cytoplasm. It catalyses the reaction (R)-4'-phosphopantetheine + ATP + H(+) = 3'-dephospho-CoA + diphosphate. The protein operates within cofactor biosynthesis; coenzyme A biosynthesis; CoA from (R)-pantothenate: step 4/5. Functionally, reversibly transfers an adenylyl group from ATP to 4'-phosphopantetheine, yielding dephospho-CoA (dPCoA) and pyrophosphate. The sequence is that of Phosphopantetheine adenylyltransferase from Shewanella oneidensis (strain ATCC 700550 / JCM 31522 / CIP 106686 / LMG 19005 / NCIMB 14063 / MR-1).